The primary structure comprises 73 residues: MAAEFDGKIESKGLNPGLIVLLVIGGLLLTFLVGNFILYTYAQKNLPPRKKKPVSKKKMKKEKMKQGVQVPGE.

Positions 47–52 (PPRKKK) match the Nuclear localization signal motif. The span at 47–63 (PPRKKKPVSKKKMKKEK) shows a compositional bias: basic residues. The disordered stretch occupies residues 47 to 73 (PPRKKKPVSKKKMKKEKMKQGVQVPGE).

It belongs to the S1FA transcription factor family.

It localises to the nucleus. DNA-binding protein that specifically recognizes a negative element (S1F) within the RPS1 promoter. This chain is DNA-binding protein S1FA3 (S1FA3), found in Arabidopsis thaliana (Mouse-ear cress).